A 162-amino-acid chain; its full sequence is Flagellar assembly factor FliW (162 aa).

The protein belongs to the FliW family. As to quaternary structure, interacts with translational regulator CsrA and flagellin(s).

Its subcellular location is the cytoplasm. In terms of biological role, acts as an anti-CsrA protein, binds CsrA and prevents it from repressing translation of its target genes, one of which is flagellin. Binds to flagellin and participates in the assembly of the flagellum. The polypeptide is Flagellar assembly factor FliW (Magnetococcus marinus (strain ATCC BAA-1437 / JCM 17883 / MC-1)).